We begin with the raw amino-acid sequence, 479 residues long: Cyclin-dependent kinase F-1 (479 aa).

Residues 24-419 enclose the Protein kinase domain; that stretch reads YEVLGRAGSG…AADLLNDPYF (396 aa). ATP contacts are provided by residues 30–38 and lysine 53; that span reads AGSGAYADV. Catalysis depends on aspartate 146, which acts as the Proton acceptor. Threonine 291 carries the phosphothreonine modification. The segment at 429–479 is disordered; it reads EGLQVPESKDEDDDSTEEWANFRGGDSDSDFDEFGSMDVTKTDKGFSIRFS. Over residues 468–479 the composition is skewed to basic and acidic residues; that stretch reads TKTDKGFSIRFS.

The protein belongs to the protein kinase superfamily. CMGC Ser/Thr protein kinase family. CDC2/CDKX subfamily.

It carries out the reaction L-seryl-[protein] + ATP = O-phospho-L-seryl-[protein] + ADP + H(+). It catalyses the reaction L-threonyl-[protein] + ATP = O-phospho-L-threonyl-[protein] + ADP + H(+). The catalysed reaction is [DNA-directed RNA polymerase] + ATP = phospho-[DNA-directed RNA polymerase] + ADP + H(+). In Oryza sativa subsp. japonica (Rice), this protein is Cyclin-dependent kinase F-1 (CDKF-1).